Reading from the N-terminus, the 489-residue chain is uncharacterized protein (489 aa).

One can recognise a 2Fe-2S ferredoxin-type domain in the interval 2–84 (IKITVKRFNG…GMIIEPLRGF (83 aa)). Positions 48, 53, 56, and 68 each coordinate [2Fe-2S] cluster. 4Fe-4S ferredoxin-type domains are found at residues 123–155 (KYVEENKELRGCIDCLSCLSVCPAREVSDYPGP) and 177–205 (TAYFENIYNCTTCAKCVEVCPKEIDIVHR). Positions 134, 137, 140, 144, 186, 189, 192, and 196 each coordinate [4Fe-4S] cluster.

The protein belongs to the succinate dehydrogenase/fumarate reductase iron-sulfur protein family.

This is an uncharacterized protein from Methanocaldococcus jannaschii (strain ATCC 43067 / DSM 2661 / JAL-1 / JCM 10045 / NBRC 100440) (Methanococcus jannaschii).